The chain runs to 460 residues: Cysteine--tRNA ligase (460 aa).

Residue C28 participates in Zn(2+) binding. The 'HIGH' region signature appears at 30–40 (MTVYDYCHLGH). C209, H234, and E238 together coordinate Zn(2+). Residues 266–270 (KMSKS) carry the 'KMSKS' region motif. K269 serves as a coordination point for ATP.

The protein belongs to the class-I aminoacyl-tRNA synthetase family. Monomer. The cofactor is Zn(2+).

It is found in the cytoplasm. The catalysed reaction is tRNA(Cys) + L-cysteine + ATP = L-cysteinyl-tRNA(Cys) + AMP + diphosphate. This chain is Cysteine--tRNA ligase, found in Pseudomonas putida (strain W619).